The following is a 282-amino-acid chain: ATP synthase subunit a (282 aa).

5 consecutive transmembrane segments (helical) span residues 45–65, 106–126, 160–179, 232–252, and 253–273; these read AIHV…LWLF, IAPL…MDLI, INAT…FYSI, LIFI…SVPW, and AIFH…LTIV.

It belongs to the ATPase A chain family. F-type ATPases have 2 components, CF(1) - the catalytic core - and CF(0) - the membrane proton channel. CF(1) has five subunits: alpha(3), beta(3), gamma(1), delta(1), epsilon(1). CF(0) has three main subunits: a(1), b(2) and c(9-12). The alpha and beta chains form an alternating ring which encloses part of the gamma chain. CF(1) is attached to CF(0) by a central stalk formed by the gamma and epsilon chains, while a peripheral stalk is formed by the delta and b chains.

The protein localises to the cell inner membrane. In terms of biological role, key component of the proton channel; it plays a direct role in the translocation of protons across the membrane. The sequence is that of ATP synthase subunit a from Marinomonas sp. (strain MWYL1).